A 417-amino-acid chain; its full sequence is Histidine--tRNA ligase (417 aa).

It belongs to the class-II aminoacyl-tRNA synthetase family. As to quaternary structure, homodimer.

Its subcellular location is the cytoplasm. It carries out the reaction tRNA(His) + L-histidine + ATP = L-histidyl-tRNA(His) + AMP + diphosphate + H(+). The chain is Histidine--tRNA ligase from Acetivibrio thermocellus (strain ATCC 27405 / DSM 1237 / JCM 9322 / NBRC 103400 / NCIMB 10682 / NRRL B-4536 / VPI 7372) (Clostridium thermocellum).